Consider the following 493-residue polypeptide: Ribose import ATP-binding protein RbsA (493 aa).

ABC transporter domains lie at I3–E239 and G252–R493. ATP is bound at residue G35 to S42.

This sequence belongs to the ABC transporter superfamily. Ribose importer (TC 3.A.1.2.1) family. As to quaternary structure, the complex is composed of an ATP-binding protein (RbsA), two transmembrane proteins (RbsC) and a solute-binding protein (RbsB).

The protein localises to the cell membrane. The catalysed reaction is D-ribose(out) + ATP + H2O = D-ribose(in) + ADP + phosphate + H(+). Part of the ABC transporter complex RbsABC involved in ribose import. Responsible for energy coupling to the transport system. The chain is Ribose import ATP-binding protein RbsA from Bacillus licheniformis (strain ATCC 14580 / DSM 13 / JCM 2505 / CCUG 7422 / NBRC 12200 / NCIMB 9375 / NCTC 10341 / NRRL NRS-1264 / Gibson 46).